Reading from the N-terminus, the 147-residue chain is Large ribosomal subunit protein bL9 (147 aa).

Belongs to the bacterial ribosomal protein bL9 family.

Binds to the 23S rRNA. In Campylobacter jejuni subsp. jejuni serotype O:2 (strain ATCC 700819 / NCTC 11168), this protein is Large ribosomal subunit protein bL9.